A 157-amino-acid chain; its full sequence is 2-C-methyl-D-erythritol 2,4-cyclodiphosphate synthase (157 aa).

Positions 9 and 11 each coordinate a divalent metal cation. Residues 9–11 (DVH) and 35–36 (HS) contribute to the 4-CDP-2-C-methyl-D-erythritol 2-phosphate site. His-43 is a binding site for a divalent metal cation. 4-CDP-2-C-methyl-D-erythritol 2-phosphate is bound by residues 57 to 59 (DIG), 62 to 66 (FPDTD), 101 to 107 (AEKPKMA), 133 to 136 (TTTE), Phe-140, and Arg-143.

Belongs to the IspF family. Homotrimer. The cofactor is a divalent metal cation.

It carries out the reaction 4-CDP-2-C-methyl-D-erythritol 2-phosphate = 2-C-methyl-D-erythritol 2,4-cyclic diphosphate + CMP. The protein operates within isoprenoid biosynthesis; isopentenyl diphosphate biosynthesis via DXP pathway; isopentenyl diphosphate from 1-deoxy-D-xylulose 5-phosphate: step 4/6. Its function is as follows. Involved in the biosynthesis of isopentenyl diphosphate (IPP) and dimethylallyl diphosphate (DMAPP), two major building blocks of isoprenoid compounds. Catalyzes the conversion of 4-diphosphocytidyl-2-C-methyl-D-erythritol 2-phosphate (CDP-ME2P) to 2-C-methyl-D-erythritol 2,4-cyclodiphosphate (ME-CPP) with a corresponding release of cytidine 5-monophosphate (CMP). This is 2-C-methyl-D-erythritol 2,4-cyclodiphosphate synthase from Listeria monocytogenes serotype 4b (strain F2365).